A 387-amino-acid chain; its full sequence is Probable NADH-dependent butanol dehydrogenase 1 (387 aa).

This sequence belongs to the iron-containing alcohol dehydrogenase family.

It functions in the pathway alcohol metabolism; butanol biosynthesis. The polypeptide is Probable NADH-dependent butanol dehydrogenase 1 (yugJ) (Bacillus subtilis (strain 168)).